The primary structure comprises 154 residues: Prefoldin subunit alpha (154 aa).

The protein belongs to the prefoldin alpha subunit family. Heterohexamer of two alpha and four beta subunits.

Its subcellular location is the cytoplasm. In terms of biological role, molecular chaperone capable of stabilizing a range of proteins. Seems to fulfill an ATP-independent, HSP70-like function in archaeal de novo protein folding. The sequence is that of Prefoldin subunit alpha from Hyperthermus butylicus (strain DSM 5456 / JCM 9403 / PLM1-5).